The chain runs to 203 residues: N-(5'-phosphoribosyl)anthranilate isomerase (203 aa).

It belongs to the TrpF family.

The catalysed reaction is N-(5-phospho-beta-D-ribosyl)anthranilate = 1-(2-carboxyphenylamino)-1-deoxy-D-ribulose 5-phosphate. Its pathway is amino-acid biosynthesis; L-tryptophan biosynthesis; L-tryptophan from chorismate: step 3/5. This Listeria innocua serovar 6a (strain ATCC BAA-680 / CLIP 11262) protein is N-(5'-phosphoribosyl)anthranilate isomerase.